Consider the following 182-residue polypeptide: Dipetalodipin (182 aa).

An N-terminal signal peptide occupies residues 1 to 18; it reads MKTIIAAIFLGILMHAFA. 3 disulfide bridges follow: C21-C134, C55-C181, and C87-C103.

It belongs to the calycin superfamily. Triabin family. As to expression, expressed in salivary glands.

The protein localises to the secreted. Its function is as follows. Inhibits platelet aggregation, vasoconstriction, and angiogenesis through binding to distinct eicosanoids involved in inflammation (acts as a scavenger), and has a role in inhibiting host innate immunity by impairing platelet-assisted formation of neutrophil extracellular traps (NETs). Inhibits platelet aggregation by collagen (IC(50)=30 nM), thromboxane A2 mimetic (TXA2 mimetic), or arachidonic acid (AA) without affecting aggregation induced by ADP, convulxin (GP6 agonist), PMA, and ristocetin (vWF-dependent platelet agglutinator). Binds with high affinity to TXA2, TXB2, prostaglandine H2 mimetic (PGH2 mimetic), PGD2, PGJ2, and PGF2alpha. Also interacts with 15(S)-hydroxyeicosatetraenoic acid (HETE), being the first calycin/lipocalin described to date to bind to a derivative of 15-lipoxygenase. Binding is not observed to other prostaglandins, leukotrienes, HETEs, lipids, and biogenic amines. It prevents contraction of rat uterus stimulated by PGF2alpha and induces relaxation of aorta previously contracted with TXA2 mimetic. In addition, it inhibits angiogenesis mediated by 15(S)-HETE and does not enhance inhibition of collagen-induced platelet aggregation by SQ29548 (TXA2 antagonist) and indomethacin. Also impairs platelet-assisted formation of neutrophil extracellular traps (NETs). NETs are web-like structures of DNA and proteins that play an important role in killing of pathogens. In addition, NETs are implicated in thrombus formation. In vivo, this protein exhibits antithrombotic activity in two distinct mice models that are highly dependent on platelets. It is noteworthy that it inhibits thrombosis without promoting excessive bleeding. This chain is Dipetalodipin, found in Dipetalogaster maximus (Blood-sucking bug).